Reading from the N-terminus, the 236-residue chain is Eukaryotic translation initiation factor 3 subunit J (236 aa).

Positions 1 to 65 are disordered; it reads MADDWESAAD…APAKPKPNKA (65 aa). Acidic residues predominate over residues 28 to 46; it reads GEDEDEDIKDSWEDEEEKK. Residues 47–58 show a composition bias toward basic and acidic residues; the sequence is DEEKPTKTEAPA.

It belongs to the eIF-3 subunit J family. As to quaternary structure, component of the eukaryotic translation initiation factor 3 (eIF-3) complex. The eIF-3 complex interacts with pix.

It is found in the cytoplasm. In terms of biological role, component of the eukaryotic translation initiation factor 3 (eIF-3) complex, which is involved in protein synthesis of a specialized repertoire of mRNAs and, together with other initiation factors, stimulates binding of mRNA and methionyl-tRNAi to the 40S ribosome. The eIF-3 complex specifically targets and initiates translation of a subset of mRNAs involved in cell proliferation. This chain is Eukaryotic translation initiation factor 3 subunit J, found in Drosophila melanogaster (Fruit fly).